A 229-amino-acid polypeptide reads, in one-letter code: Large ribosomal subunit protein uL1 (229 aa).

This sequence belongs to the universal ribosomal protein uL1 family. In terms of assembly, part of the 50S ribosomal subunit.

Binds directly to 23S rRNA. The L1 stalk is quite mobile in the ribosome, and is involved in E site tRNA release. In terms of biological role, protein L1 is also a translational repressor protein, it controls the translation of the L11 operon by binding to its mRNA. The sequence is that of Large ribosomal subunit protein uL1 from Streptococcus sanguinis (strain SK36).